The chain runs to 109 residues: MHPQLEAERFHSCLDFINALDKCHQKEYYKRIFGLCNNEKDALNKCLKEASLNNKKRAVIESRIKRADVEKRWKKIEEEEYGEDAILKTILDRQYAKKKQESDNDANSK.

The CHCH domain occupies Phe10–Asn54. 2 consecutive short sequence motifs (cx9C motif) follow at residues Cys13–Cys23 and Cys36–Cys46. Intrachain disulfides connect Cys13/Cys46 and Cys23/Cys36.

It belongs to the CMC family. In terms of assembly, interacts with CMC1.

It is found in the mitochondrion inner membrane. It localises to the mitochondrion intermembrane space. Functionally, required for mitochondrial cytochrome c oxidase (COX) assembly and respiration. May be involved in copper trafficking and distribution to mitochondrial COX and SOD1. This chain is COX assembly mitochondrial protein 2 (CMC2), found in Saccharomyces cerevisiae (strain ATCC 204508 / S288c) (Baker's yeast).